The chain runs to 32 residues: Ferredoxin (32 aa).

The 2Fe-2S ferredoxin-type domain maps to 3-32; the sequence is YKVRLLSEAEGIDVTIDCADDVYILDAAEE.

It belongs to the 2Fe2S plant-type ferredoxin family. It depends on [2Fe-2S] cluster as a cofactor.

The protein localises to the plastid. It localises to the chloroplast. Ferredoxins are iron-sulfur proteins that transfer electrons in a wide variety of metabolic reactions. The chain is Ferredoxin from Porphyridium purpureum (Red alga).